The chain runs to 572 residues: MRVSKYLLSTQKETPANAEVVSHQLMLRAGMIRRNASGLYSYLPTGLRVLRKVEAIVREEMNKAGAIEILMPMVQPGDLWVETGRWDQFGPELLRFTDRHNRDFVLGPTHEEVITDLIRKEVSSYKQLPLNLYQIQTKFRDEVRPRFGVMRSREFLMKDAYSFHLTQETLDETYQAMYTAYSNIFSRMGLAFRPVLADTGSIGGSVSHEFHVLAQSGEDLIAYSTGSDYAANIEKAEAPLPTEPRGEATEALRTVDTPNAKTIAELVEQFGVAIEKTIKTLIVKGATEEAPLVALLVRGDHELNEIKADKLELVASPLEFAGEAEIRAAVGAGTGSIGPVNLKMPIIADHSVLVMSDFAAGANEDGKHFFGINWERDLPLVQGADIRNVVEGEATPDGKGTYAFARGIEVGHIFQLGNKYSEAMNATVLDENGKSQIMLMGCYGVGVSRIVAAAIEQNNDERGIVWPEAIAPFTVGILPMNMHKSHRVTDTAEALYKELTEAGFEVLFDDRKERPGVMFADMELLGIPHTVVIGDRNIDTGVYEYKNRRTGEKTEVPFAELVSFLKAQFQQG.

The protein belongs to the class-II aminoacyl-tRNA synthetase family. ProS type 1 subfamily. In terms of assembly, homodimer.

The protein resides in the cytoplasm. It carries out the reaction tRNA(Pro) + L-proline + ATP = L-prolyl-tRNA(Pro) + AMP + diphosphate. In terms of biological role, catalyzes the attachment of proline to tRNA(Pro) in a two-step reaction: proline is first activated by ATP to form Pro-AMP and then transferred to the acceptor end of tRNA(Pro). As ProRS can inadvertently accommodate and process non-cognate amino acids such as alanine and cysteine, to avoid such errors it has two additional distinct editing activities against alanine. One activity is designated as 'pretransfer' editing and involves the tRNA(Pro)-independent hydrolysis of activated Ala-AMP. The other activity is designated 'posttransfer' editing and involves deacylation of mischarged Ala-tRNA(Pro). The misacylated Cys-tRNA(Pro) is not edited by ProRS. The protein is Proline--tRNA ligase of Shewanella amazonensis (strain ATCC BAA-1098 / SB2B).